The primary structure comprises 31 residues: Cytochrome b6-f complex subunit 6 (31 aa).

Residues 3–23 form a helical membrane-spanning segment; that stretch reads IAIDYFLLVGFCFAFTSGLYL.

It belongs to the PetL family. The 4 large subunits of the cytochrome b6-f complex are cytochrome b6, subunit IV (17 kDa polypeptide, PetD), cytochrome f and the Rieske protein, while the 4 small subunits are PetG, PetL, PetM and PetN. The complex functions as a dimer.

It localises to the plastid. The protein resides in the chloroplast thylakoid membrane. Component of the cytochrome b6-f complex, which mediates electron transfer between photosystem II (PSII) and photosystem I (PSI), cyclic electron flow around PSI, and state transitions. PetL is important for photoautotrophic growth as well as for electron transfer efficiency and stability of the cytochrome b6-f complex. The polypeptide is Cytochrome b6-f complex subunit 6 (Trieres chinensis (Marine centric diatom)).